Reading from the N-terminus, the 124-residue chain is Succinate dehydrogenase cytochrome b556 subunit (124 aa).

Over 1 to 29 (MTKTKQEIYNKRPTSPHLTIYKPQISSTL) the chain is Cytoplasmic. The chain crosses the membrane as a helical span at residues 30-55 (SILYRMTGVALFFAVSILVWWLILSK). Over 56-67 (YDNNYLQLAECC) the chain is Periplasmic. Residues 68-88 (IIKICLVAVSYAWFYHLCNGI) form a helical membrane-spanning segment. H83 is a heme binding site. Topologically, residues 89 to 103 (RHLFWDIGYGFSIKL) are cytoplasmic. The chain crosses the membrane as a helical span at residues 104–124 (VNITGWCVVVGSVLLTVLLWV).

This sequence belongs to the cytochrome b560 family. In terms of assembly, part of an enzyme complex containing four subunits: a flavoprotein, an iron-sulfur protein, plus two membrane-anchoring proteins, SdhC and SdhD. The complex can form homotrimers. It depends on heme as a cofactor.

It is found in the cell inner membrane. Its pathway is carbohydrate metabolism; tricarboxylic acid cycle. Membrane-anchoring subunit of succinate dehydrogenase (SDH). The chain is Succinate dehydrogenase cytochrome b556 subunit (sdhC) from Rickettsia conorii (strain ATCC VR-613 / Malish 7).